We begin with the raw amino-acid sequence, 443 residues long: Probable ribonuclease FAU-1 (443 aa).

It belongs to the FAU-1 family.

Functionally, probable RNase involved in rRNA stability through maturation and/or degradation of precursor rRNAs. Binds to RNA in loop regions with AU-rich sequences. In Pyrobaculum aerophilum (strain ATCC 51768 / DSM 7523 / JCM 9630 / CIP 104966 / NBRC 100827 / IM2), this protein is Probable ribonuclease FAU-1.